We begin with the raw amino-acid sequence, 432 residues long: Lipoyl synthase, mitochondrial (432 aa).

The span at 32–68 (TLGATPGSTSTSTSTSTATTTTLESTSTSTSGDATET) shows a compositional bias: low complexity. Residues 32–71 (TLGATPGSTSTSTSTSTATTTTLESTSTSTSGDATETTIK) are disordered. 7 residues coordinate [4Fe-4S] cluster: C150, C155, C161, C180, C184, C187, and S395. One can recognise a Radical SAM core domain in the interval 165–384 (KKSEATATIM…RDVALEMGFL (220 aa)).

The protein belongs to the radical SAM superfamily. Lipoyl synthase family. [4Fe-4S] cluster serves as cofactor.

The protein resides in the mitochondrion. The enzyme catalyses [[Fe-S] cluster scaffold protein carrying a second [4Fe-4S](2+) cluster] + N(6)-octanoyl-L-lysyl-[protein] + 2 oxidized [2Fe-2S]-[ferredoxin] + 2 S-adenosyl-L-methionine + 4 H(+) = [[Fe-S] cluster scaffold protein] + N(6)-[(R)-dihydrolipoyl]-L-lysyl-[protein] + 4 Fe(3+) + 2 hydrogen sulfide + 2 5'-deoxyadenosine + 2 L-methionine + 2 reduced [2Fe-2S]-[ferredoxin]. Its pathway is protein modification; protein lipoylation via endogenous pathway; protein N(6)-(lipoyl)lysine from octanoyl-[acyl-carrier-protein]: step 2/2. Catalyzes the radical-mediated insertion of two sulfur atoms into the C-6 and C-8 positions of the octanoyl moiety bound to the lipoyl domains of lipoate-dependent enzymes, thereby converting the octanoylated domains into lipoylated derivatives. This is Lipoyl synthase, mitochondrial from Lodderomyces elongisporus (strain ATCC 11503 / CBS 2605 / JCM 1781 / NBRC 1676 / NRRL YB-4239) (Yeast).